The primary structure comprises 633 residues: Threonine--tRNA ligase (633 aa).

Residues 1-61 enclose the TGS domain; that stretch reads MINVYFSDNS…TEDCKFEVIT (61 aa). The tract at residues 242-533 is catalytic; it reads DHRKIGKELE…LIEHHSGKLP (292 aa). Zn(2+) contacts are provided by C333, H384, and H510.

This sequence belongs to the class-II aminoacyl-tRNA synthetase family. As to quaternary structure, homodimer. Zn(2+) is required as a cofactor.

It is found in the cytoplasm. It carries out the reaction tRNA(Thr) + L-threonine + ATP = L-threonyl-tRNA(Thr) + AMP + diphosphate + H(+). In terms of biological role, catalyzes the attachment of threonine to tRNA(Thr) in a two-step reaction: L-threonine is first activated by ATP to form Thr-AMP and then transferred to the acceptor end of tRNA(Thr). Also edits incorrectly charged L-seryl-tRNA(Thr). This Ehrlichia ruminantium (strain Gardel) protein is Threonine--tRNA ligase.